Reading from the N-terminus, the 206-residue chain is Protein GET1 (206 aa).

Over 1–4 (MPSL) the chain is Lumenal. A helical membrane pass occupies residues 5–24 (LITILLLNIVIYVINTIGAA). Residues 25 to 110 (TIDSLLWLFY…SFDMTVKSVR (86 aa)) lie on the Cytoplasmic side of the membrane. Residues 42–99 (SHMAREQRRLKREVIQLKREMNATSSQDEFAKWAKLRRRHDKALETYEAKNNELTQCK) adopt a coiled-coil conformation. The helical transmembrane segment at 111 to 131 (WAATSGLMLFLQFWYSKRPIF) threads the bilayer. Topologically, residues 132 to 155 (TLPPGWIPWQVQWVLSFPRAPMGT) are lumenal. The chain crosses the membrane as a helical span at residues 156 to 172 (VSIQIWGGACATVVALV). Residues 173 to 206 (GDAVGATMGFVSASKKEGMKVGAGVGEKEGKKSQ) are Cytoplasmic-facing.

The protein belongs to the WRB/GET1 family. As to quaternary structure, interacts with GET3.

Its subcellular location is the endoplasmic reticulum membrane. Functionally, required for the post-translational delivery of tail-anchored (TA) proteins to the endoplasmic reticulum. Acts as a membrane receptor for soluble GET3, which recognizes and selectively binds the transmembrane domain of TA proteins in the cytosol. The chain is Protein GET1 from Ajellomyces dermatitidis (strain ER-3 / ATCC MYA-2586) (Blastomyces dermatitidis).